A 655-amino-acid polypeptide reads, in one-letter code: Protein-glucosylgalactosylhydroxylysine glucosidase (655 aa).

Residue Trp-258 to Asp-259 participates in substrate binding. Glu-388 functions as the Proton donor in the catalytic mechanism. Residue Lys-456 to Gln-457 coordinates substrate.

The protein belongs to the glycosyl hydrolase 65 family.

It catalyses the reaction (5R)-5-O-[alpha-D-glucosyl-(1-&gt;2)-beta-D-galactosyl]-5-hydroxy-L-lysyl-[collagen] + H2O = (5R)-5-O-(beta-D-galactosyl)-5-hydroxy-L-lysyl-[collagen] + D-glucose. In terms of biological role, catalyzes the hydrolysis of glucose from the disaccharide unit linked to hydroxylysine residues of collagen and collagen-like proteins. In Danio rerio (Zebrafish), this protein is Protein-glucosylgalactosylhydroxylysine glucosidase.